Reading from the N-terminus, the 431-residue chain is MDSAITLWQFLLQLLQKPQNKHMICWTSNDGQFKLLQAEEVARLWGIRKNKPNMNYDKLSRALRYYYVKNIIKKVNGQKFVYKFVSYPEILNMDPMTVGRIEGDCESLNFSEVSSSSKDVENGGKDKPPQPGAKTSSRNDYIHSGLYSSFTLNSLNSSNVKLFKLIKTENPAEKLAEKKSPQEPTPSVIKFVTTPSKKPPVEPVAATISIGPSISPSSEETIQALETLVSPKLPSLEAPTSASNVMTAFATTPPISSIPPLQEPPRTPSPPLSSHPDIDTDIDSVASQPMELPENLSLEPKDQDSVLLEKDKVNNSSRSKKPKGLELAPTLVITSSDPSPLGILSPSLPTASLTPAFFSQTPIILTPSPLLSSIHFWSTLSPVAPLSPARLQGANTLFQFPSVLNSHGPFTLSGLDGPSTPGPFSPDLQKT.

Positions 5–85 (ITLWQFLLQL…NGQKFVYKFV (81 aa)) form a DNA-binding region, ETS. The segment at 114–139 (SSSSKDVENGGKDKPPQPGAKTSSRN) is disordered. Residues 118–128 (KDVENGGKDKP) show a composition bias toward basic and acidic residues. A Glycyl lysine isopeptide (Lys-Gly) (interchain with G-Cter in SUMO2) cross-link involves residue Lys-167. The residue at position 180 (Ser-180) is a Phosphoserine. 3 disordered regions span residues 251 to 282 (TTPP…DTDI), 294 to 323 (ENLS…KKPK), and 411 to 431 (TLSG…LQKT). Over residues 261–273 (LQEPPRTPSPPLS) the composition is skewed to pro residues. Residues 299–313 (EPKDQDSVLLEKDKV) show a composition bias toward basic and acidic residues.

The protein belongs to the ETS family. In terms of assembly, interacts with SIRT7.

The protein localises to the nucleus. Functionally, involved in both transcriptional activation and repression. Interaction with SIRT7 leads to recruitment and stabilization of SIRT7 at promoters, followed by deacetylation of histone H3 at 'Lys-18' (H3K18Ac) and subsequent transcription repression. Forms a ternary complex with the serum response factor (SRF). Requires DNA-bound SRF for ternary complex formation and makes extensive DNA contacts to the 5'side of SRF, but does not bind DNA autonomously. The polypeptide is ETS domain-containing protein Elk-4 (ELK4) (Homo sapiens (Human)).